We begin with the raw amino-acid sequence, 539 residues long: Tyrosine-protein kinase csk-1 (539 aa).

In terms of domain architecture, SH3 spans 43–110; that stretch reads SPGNDVIVTR…HADCVVRING (68 aa). Positions 129-148 are disordered; sequence PGAASTTSSTSSHHSTAANH. Low complexity predominate over residues 131–146; the sequence is AASTTSSTSSHHSTAA. The SH2 domain occupies 151-241; that stretch reads WFHSMISREN…GLCHRLVTPI (91 aa). One can recognise a Protein kinase domain in the interval 283-535; that stretch reads IDVGDTIGHG…GQVLQRLTTI (253 aa). Residues 289 to 297 and lysine 310 contribute to the ATP site; that span reads IGHGEFGDV. Residue aspartate 403 is the Proton acceptor of the active site.

This sequence belongs to the protein kinase superfamily. Tyr protein kinase family. CSK subfamily. Mg(2+) is required as a cofactor. The cofactor is Mn(2+). As to expression, expressed predominantly in pharyngeal muscles in procorpus, metacorpus and terminal bulb. Expressed also in some neurons (ASE, ADF, AVA, AUA, RMDV and BAG) in the head region, anchor cell, vulva, cells around anus, body wall muscle and gondal distal tip cells.

It catalyses the reaction L-tyrosyl-[protein] + ATP = O-phospho-L-tyrosyl-[protein] + ADP + H(+). In terms of biological role, non-receptor tyrosine-protein kinase which plays a role in pharynx function by regulating pumping and the orientation of pharyngeal muscle fibers, independently of src-1 and src-2. May phosphorylate and thereby negatively regulate src-1 and src-2 activities. The sequence is that of Tyrosine-protein kinase csk-1 from Caenorhabditis elegans.